A 378-amino-acid polypeptide reads, in one-letter code: Lipoyl synthase, mitochondrial (378 aa).

[4Fe-4S] cluster is bound by residues cysteine 109, cysteine 114, cysteine 120, cysteine 140, cysteine 144, cysteine 147, and serine 356. The Radical SAM core domain maps to glutamate 125–arginine 345.

The protein belongs to the radical SAM superfamily. Lipoyl synthase family. [4Fe-4S] cluster is required as a cofactor.

The protein resides in the mitochondrion. The enzyme catalyses [[Fe-S] cluster scaffold protein carrying a second [4Fe-4S](2+) cluster] + N(6)-octanoyl-L-lysyl-[protein] + 2 oxidized [2Fe-2S]-[ferredoxin] + 2 S-adenosyl-L-methionine + 4 H(+) = [[Fe-S] cluster scaffold protein] + N(6)-[(R)-dihydrolipoyl]-L-lysyl-[protein] + 4 Fe(3+) + 2 hydrogen sulfide + 2 5'-deoxyadenosine + 2 L-methionine + 2 reduced [2Fe-2S]-[ferredoxin]. It participates in protein modification; protein lipoylation via endogenous pathway; protein N(6)-(lipoyl)lysine from octanoyl-[acyl-carrier-protein]: step 2/2. Catalyzes the radical-mediated insertion of two sulfur atoms into the C-6 and C-8 positions of the octanoyl moiety bound to the lipoyl domains of lipoate-dependent enzymes, thereby converting the octanoylated domains into lipoylated derivatives. The protein is Lipoyl synthase, mitochondrial of Medicago truncatula (Barrel medic).